A 382-amino-acid chain; its full sequence is Pyrimidine monooxygenase RutA (382 aa).

FMN is bound by residues 68–69, Asn-134, Glu-143, 159–160, and Ser-209; these read IK and RY.

This sequence belongs to the NtaA/SnaA/DszA monooxygenase family. RutA subfamily.

It catalyses the reaction uracil + FMNH2 + NADH + O2 = (Z)-3-ureidoacrylate + FMN + NAD(+) + H2O + H(+). It carries out the reaction thymine + FMNH2 + NADH + O2 = (Z)-2-methylureidoacrylate + FMN + NAD(+) + H2O + H(+). Catalyzes the pyrimidine ring opening between N-3 and C-4 by an unusual flavin hydroperoxide-catalyzed mechanism, adding oxygen atoms in the process to yield ureidoacrylate peracid, that immediately reacts with FMN forming ureidoacrylate and FMN-N(5)-oxide. The FMN-N(5)-oxide reacts spontaneously with NADH to produce FMN. Requires the flavin reductase RutF to regenerate FMN in vivo. The sequence is that of Pyrimidine monooxygenase RutA from Escherichia coli O8 (strain IAI1).